Here is a 119-residue protein sequence, read N- to C-terminus: Large ribosomal subunit protein bL19 (119 aa).

It belongs to the bacterial ribosomal protein bL19 family.

Its function is as follows. This protein is located at the 30S-50S ribosomal subunit interface and may play a role in the structure and function of the aminoacyl-tRNA binding site. This Arthrobacter sp. (strain FB24) protein is Large ribosomal subunit protein bL19.